We begin with the raw amino-acid sequence, 245 residues long: Adenosylcobinamide-GDP ribazoletransferase (245 aa).

Helical transmembrane passes span 31–51 (FGRA…VLYA), 61–81 (PLLQ…ALHL), 113–133 (VAVV…AALL), 138–158 (AGLL…LFLT), and 192–212 (LAFG…FAWL).

The protein belongs to the CobS family. Mg(2+) serves as cofactor.

Its subcellular location is the cell inner membrane. It carries out the reaction alpha-ribazole + adenosylcob(III)inamide-GDP = adenosylcob(III)alamin + GMP + H(+). It catalyses the reaction alpha-ribazole 5'-phosphate + adenosylcob(III)inamide-GDP = adenosylcob(III)alamin 5'-phosphate + GMP + H(+). The protein operates within cofactor biosynthesis; adenosylcobalamin biosynthesis; adenosylcobalamin from cob(II)yrinate a,c-diamide: step 7/7. Its function is as follows. Joins adenosylcobinamide-GDP and alpha-ribazole to generate adenosylcobalamin (Ado-cobalamin). Also synthesizes adenosylcobalamin 5'-phosphate from adenosylcobinamide-GDP and alpha-ribazole 5'-phosphate. The polypeptide is Adenosylcobinamide-GDP ribazoletransferase (Pseudomonas aeruginosa (strain ATCC 15692 / DSM 22644 / CIP 104116 / JCM 14847 / LMG 12228 / 1C / PRS 101 / PAO1)).